A 90-amino-acid chain; its full sequence is Large ribosomal subunit protein bL27 (90 aa).

The tract at residues Met-1–Leu-21 is disordered.

It belongs to the bacterial ribosomal protein bL27 family.

This Metamycoplasma arthritidis (strain 158L3-1) (Mycoplasma arthritidis) protein is Large ribosomal subunit protein bL27.